Reading from the N-terminus, the 368-residue chain is D-Ala-D/L-Ala epimerase (368 aa).

Residues Thr-135 and 160-162 each bind substrate; that span reads KVK. Mg(2+)-binding residues include Asp-190, Glu-216, and Asp-241. Residues Lys-265 and 318-320 contribute to the substrate site; that span reads DFD.

It belongs to the mandelate racemase/muconate lactonizing enzyme family. Mg(2+) is required as a cofactor.

In terms of biological role, catalyzes the epimerization of D-Ala-D-Ala to D-Ala-L-Ala. Has broad substrate specificity and catalyzes the epimerization of a variety of dipeptides containing an N-terminal Ala followed by a hydrophobic or polar residue, such as Val, Ser and Met (in vitro). The chain is D-Ala-D/L-Ala epimerase (tfdD) from Cytophaga hutchinsonii (strain ATCC 33406 / DSM 1761 / CIP 103989 / NBRC 15051 / NCIMB 9469 / D465).